The sequence spans 334 residues: DNA-directed RNA polymerase subunit alpha (334 aa).

The interval 1–232 (MVREEIAVST…IDLFIPFLHA (232 aa)) is alpha N-terminal domain (alpha-NTD). The alpha C-terminal domain (alpha-CTD) stretch occupies residues 268 to 334 (GIALKCIFID…ILQKHFTIDC (67 aa)).

It belongs to the RNA polymerase alpha chain family. In plastids the minimal PEP RNA polymerase catalytic core is composed of four subunits: alpha, beta, beta', and beta''. When a (nuclear-encoded) sigma factor is associated with the core the holoenzyme is formed, which can initiate transcription.

Its subcellular location is the plastid. The protein localises to the chloroplast. The enzyme catalyses RNA(n) + a ribonucleoside 5'-triphosphate = RNA(n+1) + diphosphate. DNA-dependent RNA polymerase catalyzes the transcription of DNA into RNA using the four ribonucleoside triphosphates as substrates. This chain is DNA-directed RNA polymerase subunit alpha, found in Chloranthus spicatus (Chulantree).